A 985-amino-acid chain; its full sequence is Coiled-coil domain-containing protein 33 (985 aa).

Residues methionine 228–threonine 263 are disordered. Residues threonine 263 to leucine 398 form the C2 domain. Residues valine 599–glutamate 745 are a coiled coil. The interval alanine 821–glutamine 842 is disordered. A coiled-coil region spans residues aspartate 885 to glutamine 928. A disordered region spans residues glycine 931–threonine 985. Polar residues-rich tracts occupy residues alanine 946 to serine 956 and proline 972 to threonine 985.

This Mus musculus (Mouse) protein is Coiled-coil domain-containing protein 33 (Ccdc33).